The chain runs to 254 residues: Alcohol dehydrogenase (254 aa).

Position 10–33 (F10–L33) interacts with NAD(+). Residue S138 coordinates substrate. Residue Y151 is the Proton acceptor of the active site.

This sequence belongs to the short-chain dehydrogenases/reductases (SDR) family. As to quaternary structure, homodimer.

The catalysed reaction is a primary alcohol + NAD(+) = an aldehyde + NADH + H(+). It catalyses the reaction a secondary alcohol + NAD(+) = a ketone + NADH + H(+). In Drosophila mimica (Fruit fly), this protein is Alcohol dehydrogenase (Adh).